We begin with the raw amino-acid sequence, 480 residues long: EGF-like repeat and discoidin I-like domain-containing protein 3 (480 aa).

The first 23 residues, 1-23 (MKRSVAVWLLVGLSLGVPQFGKG), serve as a signal peptide directing secretion. The 37-residue stretch at 24–60 (DICDPNPCENGGICLPGLADGSFSCECPDGFTDPNCS) folds into the EGF-like 1 domain. Cystine bridges form between Cys26–Cys37, Cys31–Cys48, and Cys50–Cys59. O-linked (GalNAc...) threonine glycosylation occurs at Thr73. EGF-like domains lie at 74-117 (SAGP…IHCQ) and 119-155 (NINE…RNCQ). 3 disulfide bridges follow: Cys78–Cys89, Cys83–Cys105, and Cys107–Cys116. The O-linked (Fuc...) threonine glycan is linked to Thr88. Positions 96–98 (RGD) match the Cell attachment site motif. Ca(2+) is bound by residues Asn119, Ile120, and Glu122. 6 disulfide bridges follow: Cys123–Cys134, Cys128–Cys143, Cys145–Cys154, Cys158–Cys314, Cys301–Cys305, and Cys319–Cys476. Asp136 and Leu137 together coordinate Ca(2+). An N-linked (GlcNAc...) asparagine glycan is attached at Asn140. 2 F5/8 type C domains span residues 158 to 314 (CSGP…LLGC) and 319 to 476 (CSEP…LLGC).

The protein resides in the secreted. In terms of biological role, promotes adhesion of endothelial cells through interaction with the alpha-v/beta-3 integrin receptor. Inhibits formation of vascular-like structures. May be involved in regulation of vascular morphogenesis of remodeling in embryonic development. This chain is EGF-like repeat and discoidin I-like domain-containing protein 3 (EDIL3), found in Homo sapiens (Human).